Reading from the N-terminus, the 32-residue chain is Snaclec (32 aa).

As to quaternary structure, dimer; disulfide-linked. As to expression, expressed by the venom gland.

The protein localises to the secreted. Functionally, interferes with one step of hemostasis (modulation of platelet aggregation, or coagulation cascade, for example). The protein is Snaclec of Bothrops diporus (Chaco lancehead).